Here is an 88-residue protein sequence, read N- to C-terminus: UPF0297 protein STER_1937 (88 aa).

Belongs to the UPF0297 family.

This chain is UPF0297 protein STER_1937, found in Streptococcus thermophilus (strain ATCC BAA-491 / LMD-9).